The following is a 155-amino-acid chain: Ribosomal RNA large subunit methyltransferase H (155 aa).

S-adenosyl-L-methionine is bound by residues leucine 72, glycine 103, and 122–127 (LSDLTL).

The protein belongs to the RNA methyltransferase RlmH family. In terms of assembly, homodimer.

The protein resides in the cytoplasm. The enzyme catalyses pseudouridine(1915) in 23S rRNA + S-adenosyl-L-methionine = N(3)-methylpseudouridine(1915) in 23S rRNA + S-adenosyl-L-homocysteine + H(+). Functionally, specifically methylates the pseudouridine at position 1915 (m3Psi1915) in 23S rRNA. The chain is Ribosomal RNA large subunit methyltransferase H from Albidiferax ferrireducens (strain ATCC BAA-621 / DSM 15236 / T118) (Rhodoferax ferrireducens).